A 492-amino-acid polypeptide reads, in one-letter code: Catalase isozyme 1 (492 aa).

Residues H65 and N138 contribute to the active site. Y348 contributes to the heme binding site.

It belongs to the catalase family. As to quaternary structure, homotetramer. The cofactor is heme.

Its subcellular location is the peroxisome. It catalyses the reaction 2 H2O2 = O2 + 2 H2O. In terms of biological role, occurs in almost all aerobically respiring organisms and serves to protect cells from the toxic effects of hydrogen peroxide. This Solanum lycopersicum (Tomato) protein is Catalase isozyme 1 (CAT1).